We begin with the raw amino-acid sequence, 254 residues long: Nickel import ATP-binding protein NikD (254 aa).

The 240-residue stretch at Pro-2 to Val-241 folds into the ABC transporter domain. Gly-36–Ser-43 contributes to the ATP binding site.

The protein belongs to the ABC transporter superfamily. Nickel importer (TC 3.A.1.5.3) family. As to quaternary structure, the complex is composed of two ATP-binding proteins (NikD and NikE), two transmembrane proteins (NikB and NikC) and a solute-binding protein (NikA).

It is found in the cell inner membrane. The catalysed reaction is Ni(2+)(out) + ATP + H2O = Ni(2+)(in) + ADP + phosphate + H(+). Functionally, part of the ABC transporter complex NikABCDE involved in nickel import. Responsible for energy coupling to the transport system. The chain is Nickel import ATP-binding protein NikD from Shigella boydii serotype 4 (strain Sb227).